We begin with the raw amino-acid sequence, 363 residues long: UDP-N-acetylglucosamine--N-acetylmuramyl-(pentapeptide) pyrophosphoryl-undecaprenol N-acetylglucosamine transferase (363 aa).

Residues 12–14 (TAG), R166, S196, and Q291 each bind UDP-N-acetyl-alpha-D-glucosamine.

This sequence belongs to the glycosyltransferase 28 family. MurG subfamily.

It localises to the cell inner membrane. It carries out the reaction di-trans,octa-cis-undecaprenyl diphospho-N-acetyl-alpha-D-muramoyl-L-alanyl-D-glutamyl-meso-2,6-diaminopimeloyl-D-alanyl-D-alanine + UDP-N-acetyl-alpha-D-glucosamine = di-trans,octa-cis-undecaprenyl diphospho-[N-acetyl-alpha-D-glucosaminyl-(1-&gt;4)]-N-acetyl-alpha-D-muramoyl-L-alanyl-D-glutamyl-meso-2,6-diaminopimeloyl-D-alanyl-D-alanine + UDP + H(+). Its pathway is cell wall biogenesis; peptidoglycan biosynthesis. Functionally, cell wall formation. Catalyzes the transfer of a GlcNAc subunit on undecaprenyl-pyrophosphoryl-MurNAc-pentapeptide (lipid intermediate I) to form undecaprenyl-pyrophosphoryl-MurNAc-(pentapeptide)GlcNAc (lipid intermediate II). This Legionella pneumophila (strain Lens) protein is UDP-N-acetylglucosamine--N-acetylmuramyl-(pentapeptide) pyrophosphoryl-undecaprenol N-acetylglucosamine transferase.